A 2435-amino-acid chain; its full sequence is Highly reducing polyketide synthase ATR6 (2435 aa).

One can recognise a Ketosynthase family 3 (KS3) domain in the interval 18-450 (AEPIAIVSAA…GSNAHVVLDN (433 aa)). Catalysis depends on for beta-ketoacyl synthase activity residues C192, H331, and H371. Residues 586 to 883 (FVFTGQGAQW…EIGPSAALGG (298 aa)) are malonyl-CoA:ACP transacylase (MAT) domain. Catalysis depends on S682, which acts as the For malonyltransferase activity. The tract at residues 979-1125 (HDLLGGKVLG…GLVRLALNAS (147 aa)) is N-terminal hotdog fold. The tract at residues 979–1291 (HDLLGGKVLG…LRGISMTSVG (313 aa)) is dehydratase (DH) domain. In terms of domain architecture, PKS/mFAS DH spans 979 to 1296 (HDLLGGKVLG…MTSVGLQGNV (318 aa)). The For beta-hydroxyacyl dehydratase activity role is filled by H1011. A C-terminal hotdog fold region spans residues 1141-1296 (QYPTPARFWY…MTSVGLQGNV (156 aa)). The interval 1724–2037 (GILDTLHFAE…DHNRLRNVVI (314 aa)) is enoylreductase (ER) domain. The tract at residues 2062-2301 (PEQTYLLVGK…ITGIAVPQPG (240 aa)) is catalytic ketoreductase (KRc) domain. Positions 2353 to 2429 (VLLSSAVGVL…VLCQKIISRM (77 aa)) constitute a Carrier domain. S2389 is subject to O-(pantetheine 4'-phosphoryl)serine.

It participates in mycotoxin biosynthesis. Its function is as follows. Highly reducing polyketide synthase; part of the core atranone cluster (CAC) which products are predicted to catalyze most or all steps of mycotoxin atranone synthesis, starting from geranylgeranyl pyrophosphate (GGPP). The initial cyclization of GGPP to dolabellane is probably performed by the terpene cyclase ATR13. The Baeyer-Villiger oxidation near the end of the atranone synthesis, which converts atranones D and E to atranones F and G is predicted to be catalyzed by the monooxygenase ATR8. Of the CAC's other predicted gene products, the reducing PKS ATR6 might synthesize a polyketide chain. This polyketide is probably transferred onto the atranone backbone by the polyketide transferase ATR5. Other predicted CAC products include 4 oxygenases (ATR2, ATR3, ATR4, and ATR14), 3 short-chain reductases (ATR7, ATR9, and ATR10), and a methyltransferase (ATR12). These may all be involved in the various steps of atranone biosynthesis, although their specific roles must await experimental determination. This is Highly reducing polyketide synthase ATR6 from Stachybotrys chlorohalonatus (strain IBT 40285).